A 154-amino-acid polypeptide reads, in one-letter code: Catabolic 3-dehydroquinase (154 aa).

Tyr25 acts as the Proton acceptor in catalysis. Substrate is bound by residues Asn79, His85, and Asp92. His105 (proton donor) is an active-site residue. Substrate-binding positions include Ile106–Ser107 and Arg116.

This sequence belongs to the type-II 3-dehydroquinase family. As to quaternary structure, homododecamer. Adopts a ring-like structure, composed of an arrangement of two hexameric rings stacked on top of one another.

The enzyme catalyses 3-dehydroquinate = 3-dehydroshikimate + H2O. The protein operates within aromatic compound metabolism; 3,4-dihydroxybenzoate biosynthesis; 3,4-dihydroxybenzoate from 3-dehydroquinate: step 1/2. Is involved in the catabolism of quinate. Allows the utilization of quinate as carbon source via the beta-ketoadipate pathway. The protein is Catabolic 3-dehydroquinase of Botryotinia fuckeliana (strain B05.10) (Noble rot fungus).